Reading from the N-terminus, the 149-residue chain is Large ribosomal subunit protein uL16 (149 aa).

It belongs to the universal ribosomal protein uL16 family. In terms of assembly, part of the 50S ribosomal subunit.

Its function is as follows. Binds 23S rRNA and is also seen to make contacts with the A and possibly P site tRNAs. The sequence is that of Large ribosomal subunit protein uL16 from Dehalococcoides mccartyi (strain ATCC BAA-2100 / JCM 16839 / KCTC 5957 / BAV1).